Here is a 236-residue protein sequence, read N- to C-terminus: Eukaryotic translation initiation factor 3 subunit J (236 aa).

The disordered stretch occupies residues 20-88 (ANNINKWEGE…AEEEKRLANL (69 aa)). Over residues 28–46 (GEDDDEDVKESWEDEEEKK) the composition is skewed to acidic residues. Basic and acidic residues-rich tracts occupy residues 47 to 58 (DEEKPTKTEVPV) and 68 to 88 (AKLE…LANL).

This sequence belongs to the eIF-3 subunit J family. Component of the eukaryotic translation initiation factor 3 (eIF-3) complex. The eIF-3 complex interacts with pix.

It localises to the cytoplasm. In terms of biological role, component of the eukaryotic translation initiation factor 3 (eIF-3) complex, which is involved in protein synthesis of a specialized repertoire of mRNAs and, together with other initiation factors, stimulates binding of mRNA and methionyl-tRNAi to the 40S ribosome. The eIF-3 complex specifically targets and initiates translation of a subset of mRNAs involved in cell proliferation. The chain is Eukaryotic translation initiation factor 3 subunit J from Drosophila willistoni (Fruit fly).